The following is a 341-amino-acid chain: Peptidoglycan recognition protein 3 (341 aa).

The signal sequence occupies residues 1–17; sequence MGTLPWLLAFFILGLQA. 2 N-acetylmuramoyl-L-alanine amidase domains span residues 77–179 and 200–325; these read TIGW…KVCP and PAKY…ILSP. An N-linked (GlcNAc...) asparagine glycan is attached at asparagine 113. 3 disulfides stabilise this stretch: cysteine 178/cysteine 300, cysteine 194/cysteine 238, and cysteine 214/cysteine 220. 3 residues coordinate peptidoglycan: histidine 231, arginine 235, and tyrosine 242. Residues 264-269 form an interaction with murein region; it reads HTYGFN.

Belongs to the N-acetylmuramoyl-L-alanine amidase 2 family. In terms of assembly, monomer. Homodimer; disulfide-linked. Heterodimer with PGLYRP4; disulfide-linked. Post-translationally, N-glycosylated. As to expression, detected in skin epidermis, eccrine sweat glands and ducts, ciliary body epithelial cells of the eye, in small intestine, colon, stomach and in mature epithelial cells of the tongue (at protein level). Highly expressed in skin and esophagus, expressed also in tonsils and thymus and to a much lesser extent in the stomach, descending colon, rectum and brain.

Its subcellular location is the secreted. Functionally, pattern receptor that binds to murein peptidoglycans (PGN) of Gram-positive bacteria. Has bactericidal activity towards Gram-positive bacteria. May kill Gram-positive bacteria by interfering with peptidoglycan biosynthesis. Also binds to Gram-negative bacteria, and has bacteriostatic activity towards Gram-negative bacteria. Plays a role in innate immunity. The protein is Peptidoglycan recognition protein 3 (PGLYRP3) of Homo sapiens (Human).